Here is a 247-residue protein sequence, read N- to C-terminus: Cytochrome c oxidase subunit 2 (247 aa).

A signal peptide spans 1-11; sequence MLLIINNIINN. Residues 12 to 38 are Mitochondrial intermembrane-facing; that stretch reads DVPTPWGVYFQDSATPNHEGIIELHDN. Residues 39-59 traverse the membrane as a helical segment; the sequence is IMFYLVLILCLVSWLLFSIVK. The Mitochondrial matrix portion of the chain corresponds to 60 to 78; the sequence is DGSKNPLPHKYLVHGQTIE. Residues 79–101 form a helical membrane-spanning segment; sequence IIWTILPALVLLVIAFPSFILLY. Residues 102 to 247 lie on the Mitochondrial intermembrane side of the membrane; that stretch reads LCDEVISPAM…KEFLTWLNEQ (146 aa). Cu cation-binding residues include His-182, Cys-217, Glu-219, Cys-221, His-225, and Met-228. Residue Glu-219 participates in Mg(2+) binding.

The protein belongs to the cytochrome c oxidase subunit 2 family. As to quaternary structure, component of the cytochrome c oxidase (complex IV, CIV), a multisubunit enzyme composed of a catalytic core of 3 subunits and several supernumerary subunits. The complex exists as a monomer or a dimer and forms supercomplexes (SCs) in the inner mitochondrial membrane with ubiquinol-cytochrome c oxidoreductase (cytochrome b-c1 complex, complex III, CIII). Cu cation is required as a cofactor. The signal sequence of COX2 is processed by IMP1.

It localises to the mitochondrion inner membrane. The catalysed reaction is 4 Fe(II)-[cytochrome c] + O2 + 8 H(+)(in) = 4 Fe(III)-[cytochrome c] + 2 H2O + 4 H(+)(out). Its function is as follows. Component of the cytochrome c oxidase, the last enzyme in the mitochondrial electron transport chain which drives oxidative phosphorylation. The respiratory chain contains 3 multisubunit complexes succinate dehydrogenase (complex II, CII), ubiquinol-cytochrome c oxidoreductase (cytochrome b-c1 complex, complex III, CIII) and cytochrome c oxidase (complex IV, CIV), that cooperate to transfer electrons derived from NADH and succinate to molecular oxygen, creating an electrochemical gradient over the inner membrane that drives transmembrane transport and the ATP synthase. Cytochrome c oxidase is the component of the respiratory chain that catalyzes the reduction of oxygen to water. Electrons originating from reduced cytochrome c in the intermembrane space (IMS) are transferred via the dinuclear copper A center (CU(A)) of subunit 2 and heme A of subunit 1 to the active site in subunit 1, a binuclear center (BNC) formed by heme A3 and copper B (CU(B)). The BNC reduces molecular oxygen to 2 water molecules using 4 electrons from cytochrome c in the IMS and 4 protons from the mitochondrial matrix. This chain is Cytochrome c oxidase subunit 2 (COX2), found in Wickerhamomyces canadensis (Yeast).